The following is a 953-amino-acid chain: Coatomer subunit beta-1 (953 aa).

5 HEAT repeats span residues 49 to 87, 93 to 127, 128 to 165, 314 to 351, and 393 to 430; these read ETLP…RDVA, PEMI…LNEP, ELLE…LPHG, DVMV…PRNV, and EVAG…TNPK.

As to quaternary structure, oligomeric complex that consists of at least the alpha, beta, beta', gamma, delta, epsilon and zeta subunits.

It is found in the cytoplasm. The protein resides in the golgi apparatus membrane. The protein localises to the cytoplasmic vesicle. Its subcellular location is the COPI-coated vesicle membrane. Its function is as follows. The coatomer is a cytosolic protein complex that binds to dilysine motifs and reversibly associates with Golgi non-clathrin-coated vesicles, which further mediate biosynthetic protein transport from the ER, via the Golgi up to the trans Golgi network. Coatomer complex is required for budding from Golgi membranes, and is essential for the retrograde Golgi-to-ER transport of dilysine-tagged proteins. This Oryza sativa subsp. japonica (Rice) protein is Coatomer subunit beta-1.